Consider the following 253-residue polypeptide: 1-(5-phosphoribosyl)-5-[(5-phosphoribosylamino)methylideneamino] imidazole-4-carboxamide isomerase (253 aa).

Aspartate 8 acts as the Proton acceptor in catalysis. Residue aspartate 129 is the Proton donor of the active site.

It belongs to the HisA/HisF family.

The protein localises to the cytoplasm. It catalyses the reaction 1-(5-phospho-beta-D-ribosyl)-5-[(5-phospho-beta-D-ribosylamino)methylideneamino]imidazole-4-carboxamide = 5-[(5-phospho-1-deoxy-D-ribulos-1-ylimino)methylamino]-1-(5-phospho-beta-D-ribosyl)imidazole-4-carboxamide. It participates in amino-acid biosynthesis; L-histidine biosynthesis; L-histidine from 5-phospho-alpha-D-ribose 1-diphosphate: step 4/9. This is 1-(5-phosphoribosyl)-5-[(5-phosphoribosylamino)methylideneamino] imidazole-4-carboxamide isomerase from Microcystis aeruginosa (strain NIES-843 / IAM M-2473).